Reading from the N-terminus, the 198-residue chain is Ribonuclease HII (198 aa).

The RNase H type-2 domain maps to 1-198 (MLCGIDEAGR…QRRSFFVKNL (198 aa)). A divalent metal cation is bound by residues D6, E7, and D112.

It belongs to the RNase HII family. Mn(2+) serves as cofactor. It depends on Mg(2+) as a cofactor.

It localises to the cytoplasm. The catalysed reaction is Endonucleolytic cleavage to 5'-phosphomonoester.. Functionally, endonuclease that specifically degrades the RNA of RNA-DNA hybrids. The chain is Ribonuclease HII from Treponema denticola (strain ATCC 35405 / DSM 14222 / CIP 103919 / JCM 8153 / KCTC 15104).